The following is a 168-amino-acid chain: ATP synthase F(1) complex subunit delta, mitochondrial (168 aa).

A mitochondrion-targeting transit peptide spans 1-22 (MLPAALLRRPGLGRLVRHARAY). Residues Lys136 and Lys165 each carry the N6-acetyllysine; alternate modification. 2 positions are modified to N6-succinyllysine; alternate: Lys136 and Lys165.

The protein belongs to the ATPase epsilon chain family. As to quaternary structure, component of the ATP synthase complex composed at least of ATP5F1A/subunit alpha, ATP5F1B/subunit beta, ATP5MC1/subunit c (homooctomer), MT-ATP6/subunit a, MT-ATP8/subunit 8, ATP5ME/subunit e, ATP5MF/subunit f, ATP5MG/subunit g, ATP5MK/subunit k, ATP5MJ/subunit j, ATP5F1C/subunit gamma, ATP5F1D/subunit delta, ATP5F1E/subunit epsilon, ATP5PF/subunit F6, ATP5PB/subunit b, ATP5PD/subunit d, ATP5PO/subunit OSCP. ATP synthase complex consists of a soluble F(1) head domain (subunits alpha(3) and beta(3)) - the catalytic core - and a membrane F(0) domain - the membrane proton channel (subunits c, a, 8, e, f, g, k and j). These two domains are linked by a central stalk (subunits gamma, delta, and epsilon) rotating inside the F1 region and a stationary peripheral stalk (subunits F6, b, d, and OSCP). Component of a complex composed at least by ATPIF1, ATP5F1A, ATP5F1B, ATP5F1C AND ATP5F1E.

It localises to the mitochondrion. The protein localises to the mitochondrion inner membrane. In terms of biological role, subunit delta, of the mitochondrial membrane ATP synthase complex (F(1)F(0) ATP synthase or Complex V) that produces ATP from ADP in the presence of a proton gradient across the membrane which is generated by electron transport complexes of the respiratory chain. ATP synthase complex consist of a soluble F(1) head domain - the catalytic core - and a membrane F(1) domain - the membrane proton channel. These two domains are linked by a central stalk rotating inside the F(1) region and a stationary peripheral stalk. During catalysis, ATP synthesis in the catalytic domain of F(1) is coupled via a rotary mechanism of the central stalk subunits to proton translocation. In vivo, can only synthesize ATP although its ATP hydrolase activity can be activated artificially in vitro. With the central stalk subunit gamma, is essential for the biogenesis of F(1) catalytic part of the ATP synthase complex namely in the formation of F1 assembly intermediate. This Homo sapiens (Human) protein is ATP synthase F(1) complex subunit delta, mitochondrial.